We begin with the raw amino-acid sequence, 232 residues long: MSLFDTIRNTLVPVHKEGYIFVGAFFVGSLVLGWIWEPLFWVGLLLTLWCAYFFRDPERLTPQDDDLVVSPADGRVSMIQMVIPPEELQLSSDPMLRISIFMNVFDVHINRAPVRGAIRQVVYREGSFLNAELDKASTDNERNSLVIDGPRGAIGVVQIAGLVARRILCWSVPGQALGVGERFGLIRFGSRLDVYLPAGAEPRVAVGQRSIGGETVIAEYGSAKGPVISRRS.

The active-site Schiff-base intermediate with substrate; via pyruvic acid is the Ser-190. Ser-190 carries the post-translational modification Pyruvic acid (Ser); by autocatalysis.

Belongs to the phosphatidylserine decarboxylase family. PSD-A subfamily. Heterodimer of a large membrane-associated beta subunit and a small pyruvoyl-containing alpha subunit. Pyruvate is required as a cofactor. Is synthesized initially as an inactive proenzyme. Formation of the active enzyme involves a self-maturation process in which the active site pyruvoyl group is generated from an internal serine residue via an autocatalytic post-translational modification. Two non-identical subunits are generated from the proenzyme in this reaction, and the pyruvate is formed at the N-terminus of the alpha chain, which is derived from the carboxyl end of the proenzyme. The post-translation cleavage follows an unusual pathway, termed non-hydrolytic serinolysis, in which the side chain hydroxyl group of the serine supplies its oxygen atom to form the C-terminus of the beta chain, while the remainder of the serine residue undergoes an oxidative deamination to produce ammonia and the pyruvoyl prosthetic group on the alpha chain.

It is found in the cell membrane. It carries out the reaction a 1,2-diacyl-sn-glycero-3-phospho-L-serine + H(+) = a 1,2-diacyl-sn-glycero-3-phosphoethanolamine + CO2. The protein operates within phospholipid metabolism; phosphatidylethanolamine biosynthesis; phosphatidylethanolamine from CDP-diacylglycerol: step 2/2. In terms of biological role, catalyzes the formation of phosphatidylethanolamine (PtdEtn) from phosphatidylserine (PtdSer). This is Phosphatidylserine decarboxylase proenzyme from Allorhizobium ampelinum (strain ATCC BAA-846 / DSM 112012 / S4) (Agrobacterium vitis (strain S4)).